We begin with the raw amino-acid sequence, 188 residues long: Elongation factor P (188 aa).

This sequence belongs to the elongation factor P family.

It is found in the cytoplasm. It functions in the pathway protein biosynthesis; polypeptide chain elongation. Functionally, involved in peptide bond synthesis. Stimulates efficient translation and peptide-bond synthesis on native or reconstituted 70S ribosomes in vitro. Probably functions indirectly by altering the affinity of the ribosome for aminoacyl-tRNA, thus increasing their reactivity as acceptors for peptidyl transferase. This chain is Elongation factor P, found in Gluconacetobacter diazotrophicus (strain ATCC 49037 / DSM 5601 / CCUG 37298 / CIP 103539 / LMG 7603 / PAl5).